We begin with the raw amino-acid sequence, 159 residues long: Small ribosomal subunit protein uS13 (159 aa).

Positions 136-159 (QRTRSTGRSGATVGVTRKKTQAKK) are disordered. Over residues 138 to 149 (TRSTGRSGATVG) the composition is skewed to low complexity.

This sequence belongs to the universal ribosomal protein uS13 family. Part of the 30S ribosomal subunit. Forms a loose heterodimer with protein S19. Forms two bridges to the 50S subunit in the 70S ribosome.

In terms of biological role, located at the top of the head of the 30S subunit, it contacts several helices of the 16S rRNA. In the 70S ribosome it contacts the 23S rRNA (bridge B1a) and protein L5 of the 50S subunit (bridge B1b), connecting the 2 subunits; these bridges are implicated in subunit movement. The chain is Small ribosomal subunit protein uS13 from Methanothrix thermoacetophila (strain DSM 6194 / JCM 14653 / NBRC 101360 / PT) (Methanosaeta thermophila).